A 132-amino-acid chain; its full sequence is Small ribosomal subunit protein uS8 (132 aa).

Belongs to the universal ribosomal protein uS8 family. Part of the 30S ribosomal subunit. Contacts proteins S5 and S12.

One of the primary rRNA binding proteins, it binds directly to 16S rRNA central domain where it helps coordinate assembly of the platform of the 30S subunit. This is Small ribosomal subunit protein uS8 from Bacillus licheniformis (strain ATCC 14580 / DSM 13 / JCM 2505 / CCUG 7422 / NBRC 12200 / NCIMB 9375 / NCTC 10341 / NRRL NRS-1264 / Gibson 46).